A 61-amino-acid chain; its full sequence is MICHNQQSSQPPTIKTCPGETNCYKKQWRDHRGTIIERGCGCPSVKKGVGIYCCKTDKCNR.

Disulfide bonds link cysteine 3-cysteine 23, cysteine 17-cysteine 40, cysteine 42-cysteine 53, and cysteine 54-cysteine 59.

This sequence belongs to the three-finger toxin family. Short-chain subfamily. Type I alpha-neurotoxin sub-subfamily. As to expression, expressed by the venom gland.

The protein localises to the secreted. Its function is as follows. Binds to muscle nicotinic acetylcholine receptor (nAChR) and inhibit acetylcholine from binding to the receptor, thereby impairing neuromuscular transmission. The polypeptide is Short neurotoxin 2 (Naja haje haje (Egyptian cobra)).